The following is a 337-amino-acid chain: 2-oxoglutarate-Fe(II) type oxidoreductase (337 aa).

One can recognise a Fe2OG dioxygenase domain in the interval 179–282 (AIATLRYLHY…RYSIPFFFTG (104 aa)). Fe cation is bound by residues His-205, Asp-207, and His-263. Residue Arg-273 participates in 2-oxoglutarate binding.

The protein belongs to the iron/ascorbate-dependent oxidoreductase family. Requires Fe(2+) as cofactor. As to expression, endocrocin is specifically produced in conidia.

It functions in the pathway secondary metabolite biosynthesis. Functionally, 2-oxoglutarate-Fe(II) type oxidoreductase; part of the gene cluster that mediates the biosynthesis of endocrocin, a simple anthraquinone interesting for many biotechnological applications. The pathway begins with the synthesis of atrochrysone thioester by the polyketide synthase (PKS) encA. The atrochrysone carboxyl ACP thioesterase encB then breaks the thioester bond and releases the atrochrysone carboxylic acid from encA. The atrochrysone carboxylic acid is then converted to endocrocin anthrone which is further oxidized into endocrocin by encC. The exact function of encD has not been identified yet, but it negatively regulates endocrocin production, likely through the modification of endocrocin itself. The polypeptide is 2-oxoglutarate-Fe(II) type oxidoreductase (Aspergillus fumigatus (strain ATCC MYA-4609 / CBS 101355 / FGSC A1100 / Af293) (Neosartorya fumigata)).